Reading from the N-terminus, the 277-residue chain is Thiazole synthase (277 aa).

Residue Lys-119 is the Schiff-base intermediate with DXP of the active site. 1-deoxy-D-xylulose 5-phosphate contacts are provided by residues Gly-180, 206 to 207 (AG), and 228 to 229 (NT).

This sequence belongs to the ThiG family. In terms of assembly, homotetramer. Forms heterodimers with either ThiH or ThiS.

The protein localises to the plastid. It localises to the chloroplast. The catalysed reaction is [ThiS sulfur-carrier protein]-C-terminal-Gly-aminoethanethioate + 2-iminoacetate + 1-deoxy-D-xylulose 5-phosphate = [ThiS sulfur-carrier protein]-C-terminal Gly-Gly + 2-[(2R,5Z)-2-carboxy-4-methylthiazol-5(2H)-ylidene]ethyl phosphate + 2 H2O + H(+). It participates in cofactor biosynthesis; thiamine diphosphate biosynthesis. In terms of biological role, catalyzes the rearrangement of 1-deoxy-D-xylulose 5-phosphate (DXP) to produce the thiazole phosphate moiety of thiamine. Sulfur is provided by the thiocarboxylate moiety of the carrier protein ThiS. In vitro, sulfur can be provided by H(2)S. This Porphyra purpurea (Red seaweed) protein is Thiazole synthase.